The sequence spans 1567 residues: ABC multidrug transporter MDR1 (1567 aa).

Positions 1 to 11 (MASQPPQPPSG) are enriched in pro residues. The interval 1 to 37 (MASQPPQPPSGQPDTQYEEYQSEVITETTNRPTPAAD) is disordered. Residues 22 to 32 (SEVITETTNRP) show a composition bias toward polar residues. Asn-149, Asn-157, and Asn-356 each carry an N-linked (GlcNAc...) asparagine glycan. The ABC transporter 1 domain maps to 167 to 432 (VQYQDTFLSP…FEEMGWYCPP (266 aa)). 6 helical membrane-spanning segments follow: residues 543-563 (STIA…SLFF), 571-591 (GFFA…LMSI), 636-656 (IPIK…LGGL), 661-681 (AKFF…SAIF), 691-711 (IPQA…YTGF), and 798-818 (LGIL…VSEL). N-linked (GlcNAc...) asparagine glycans are attached at residues Asn-819, Asn-895, and Asn-912. The ABC transporter 2 domain occupies 891–1134 (FTWRNVTYDI…LLNYFETHGA (244 aa)). Residue 927–934 (GVSGAGKT) participates in ATP binding. Residues 1172–1202 (ESRHVQQELDRIQSETSKRNEGHGQSAEKEP) form a disordered region. A helical membrane pass occupies residues 1231-1251 (IWGKLLLGLTSALFIGFSFFL). Asn-1253 carries an N-linked (GlcNAc...) asparagine glycan. The next 5 membrane-spanning stretches (helical) occupy residues 1257–1277 (AGLQ…SSLV), 1305–1325 (VFLL…GIIA), 1345–1365 (ILLL…QMII), 1372–1392 (ETAG…NGVL), and 1498–1518 (GIGW…YYLI).

It belongs to the ABC transporter superfamily. ABCG family. PDR (TC 3.A.1.205) subfamily.

The protein resides in the cell membrane. The enzyme catalyses voriconazole(in) + ATP + H2O = voriconazole(out) + ADP + phosphate + H(+). It carries out the reaction fluconazole(in) + ATP + H2O = fluconazole(out) + ADP + phosphate + H(+). It catalyses the reaction (R)-miconazole(in) + ATP + H2O = (R)-miconazole(out) + ADP + phosphate + H(+). The catalysed reaction is (S)-miconazole(in) + ATP + H2O = (S)-miconazole(out) + ADP + phosphate + H(+). Pleiotropic ABC efflux transporter that may be involved in the modulation susceptibility to a wide range of unrelated cytotoxic compounds. This chain is ABC multidrug transporter MDR1, found in Trichophyton equinum (strain ATCC MYA-4606 / CBS 127.97) (Horse ringworm fungus).